We begin with the raw amino-acid sequence, 427 residues long: Adenylosuccinate synthetase (427 aa).

Residues 12 to 18 and 40 to 42 each bind GTP; these read GDEGKGK and GHT. D13 functions as the Proton acceptor in the catalytic mechanism. Mg(2+) is bound by residues D13 and G40. IMP contacts are provided by residues 13–16, 38–41, T128, R142, Q223, T238, and R302; these read DEGK and NAGH. The Proton donor role is filled by H41. Position 298–304 (298–304) interacts with substrate; sequence TTTGRPR. GTP-binding positions include R304, 330–332, and 412–414; these read KLD and SVG.

The protein belongs to the adenylosuccinate synthetase family. Homodimer. Mg(2+) is required as a cofactor.

Its subcellular location is the cytoplasm. The catalysed reaction is IMP + L-aspartate + GTP = N(6)-(1,2-dicarboxyethyl)-AMP + GDP + phosphate + 2 H(+). It participates in purine metabolism; AMP biosynthesis via de novo pathway; AMP from IMP: step 1/2. Functionally, plays an important role in the de novo pathway of purine nucleotide biosynthesis. Catalyzes the first committed step in the biosynthesis of AMP from IMP. This is Adenylosuccinate synthetase from Carboxydothermus hydrogenoformans (strain ATCC BAA-161 / DSM 6008 / Z-2901).